The primary structure comprises 374 residues: LIM domain-binding protein 1-A (374 aa).

Disordered stretches follow at residues 1–24 (MLDRDVGPTPMYPPSYMEPGIGRH), 249–297 (PPAE…ALSS), and 322–374 (TRLE…QSSQ). Residues 267-297 (SGGSTMSSGGGNNNNSNSKKKSPASSFALSS) show a composition bias toward low complexity. Residues 299–338 (DVMVVGEPTLMGGEFGDEDERLITRLENTQFDAANGIDDE) form the LIM interaction domain (LID) domain. The span at 341 to 374 (FNSSPTMGTNSPWNSKAPSSQQGKNDNPSSQSSQ) shows a compositional bias: polar residues.

The protein belongs to the LDB family. As to expression, expressed ubiquitously in the embryo and adult.

The protein resides in the nucleus. In terms of biological role, binds to the LIM domain of a wide variety of LIM domain-containing transcription factors. This chain is LIM domain-binding protein 1-A (ldb1a), found in Danio rerio (Zebrafish).